We begin with the raw amino-acid sequence, 59 residues long: Large ribosomal subunit protein uL30 (59 aa).

Belongs to the universal ribosomal protein uL30 family. In terms of assembly, part of the 50S ribosomal subunit.

In Ruminiclostridium cellulolyticum (strain ATCC 35319 / DSM 5812 / JCM 6584 / H10) (Clostridium cellulolyticum), this protein is Large ribosomal subunit protein uL30.